Reading from the N-terminus, the 246-residue chain is tRNA1(Val) (adenine(37)-N6)-methyltransferase (246 aa).

Belongs to the methyltransferase superfamily. tRNA (adenine-N(6)-)-methyltransferase family.

It is found in the cytoplasm. It catalyses the reaction adenosine(37) in tRNA1(Val) + S-adenosyl-L-methionine = N(6)-methyladenosine(37) in tRNA1(Val) + S-adenosyl-L-homocysteine + H(+). Its function is as follows. Specifically methylates the adenine in position 37 of tRNA(1)(Val) (anticodon cmo5UAC). This chain is tRNA1(Val) (adenine(37)-N6)-methyltransferase, found in Shewanella halifaxensis (strain HAW-EB4).